The chain runs to 74 residues: O-conotoxin GeXXXIA (74 aa).

Residues 1 to 22 (MKLTCVLIITVLFLTACQLTTA) form the signal peptide. The propeptide occupies 23–33 (VTYSRGEHKHR).

Belongs to the conotoxin O1 superfamily. As to quaternary structure, homodimer; disulfide-linked. In terms of processing, may contain 2 intrachain disulfide bonds and probably one interchain disulfide bond forming the homodimer. Post-translationally, the disulfide pairing is not important for activity towards the different nAChR subtypes, since this peptide without disulfide bond or with different disulfide bonds shows the same activity. In terms of tissue distribution, expressed by the venom duct.

The protein resides in the secreted. Its function is as follows. The activity of this natural homodimer has not been tested due to low abundance. The synthetic linear peptide has been refolded, giving 4 different monomeric isomers (m1 to m4) with 2 disulfide bonds each. All isomers potently inhibit rat alpha-1-beta-1-delta-epsilon/CHRNA1-CHRNB1-CHRND-CHRNE and human alpha-9-alpha-10/CHRNA9-CHRNA10 nicotinic acetylcholine receptors (nAChR). In addition, they show a modest inhibition at human alpha-3-beta-2/CHRNA3-CHRNB2, alpha-3-beta-4/CHRNA3-CHRNB4, alpha-7/CHRNA7, and alpha-4-beta-4/CHRNA4-CHRNB4. The synthetic monomer peptide without disulfide bonds shows a potent activity on alpha-9-alpha-10/CHRNA9 and CHRNA10 (IC(50)=16.2 nM). This linear peptide does not act as a competitive antagonist, or as a channel pore blocker of nAChR. This Conus generalis (General cone) protein is O-conotoxin GeXXXIA.